Reading from the N-terminus, the 266-residue chain is Glucosamine-6-phosphate deaminase (266 aa).

Asp72 (proton acceptor; for enolization step) is an active-site residue. Residue Asp141 is the For ring-opening step of the active site. The Proton acceptor; for ring-opening step role is filled by His143. Residue Glu148 is the For ring-opening step of the active site.

The protein belongs to the glucosamine/galactosamine-6-phosphate isomerase family. NagB subfamily. In terms of assembly, homohexamer.

The catalysed reaction is alpha-D-glucosamine 6-phosphate + H2O = beta-D-fructose 6-phosphate + NH4(+). It participates in amino-sugar metabolism; N-acetylneuraminate degradation; D-fructose 6-phosphate from N-acetylneuraminate: step 5/5. Its activity is regulated as follows. Allosterically activated by N-acetylglucosamine 6-phosphate (GlcNAc6P). Its function is as follows. Catalyzes the reversible isomerization-deamination of glucosamine 6-phosphate (GlcN6P) to form fructose 6-phosphate (Fru6P) and ammonium ion. The chain is Glucosamine-6-phosphate deaminase from Aliivibrio fischeri (strain ATCC 700601 / ES114) (Vibrio fischeri).